Reading from the N-terminus, the 86-residue chain is Large ribosomal subunit protein bL31B (86 aa).

The protein belongs to the bacterial ribosomal protein bL31 family. Type B subfamily. As to quaternary structure, part of the 50S ribosomal subunit.

This chain is Large ribosomal subunit protein bL31B, found in Burkholderia lata (strain ATCC 17760 / DSM 23089 / LMG 22485 / NCIMB 9086 / R18194 / 383).